The sequence spans 1081 residues: Disheveled-associated activator of morphogenesis 1-A (1081 aa).

A GBD/FH3 domain is found at 45 to 418 (LPVPPVEELD…QIVIQNEKGQ (374 aa)). Disordered stretches follow at residues 455 to 476 (KEHN…AKTQ) and 519 to 615 (RTVC…PLKS). Residues 526-536 (PGGPPPPPGAP) show a composition bias toward pro residues. The segment covering 538–547 (GPMSMPSGNF) has biased composition (low complexity). Residues 548–585 (MPPPPPPPPPFPGGMAPPPPPPPPPPPPPGGPPPPPGL) are compositionally biased toward pro residues. The span at 586–600 (PLLGAAPPGAPLGLS) shows a compositional bias: low complexity. Positions 603–1012 (KKNIPQPKNP…EERRIRMEAQ (410 aa)) constitute an FH2 domain. The interval 696–705 (AQNCNILLSR) is actin-binding. The segment covering 1013 to 1029 (LKEQRERERKARKAKEN) has biased composition (basic and acidic residues). Disordered regions lie at residues 1013 to 1038 (LKEQ…EFDD) and 1060 to 1081 (RKRI…KLNY). The DAD domain maps to 1030–1061 (GEEEGEFDDLVSALRSGEVFDKDLSKLKRNRK). The span at 1070–1081 (SSRERPVTKLNY) shows a compositional bias: basic and acidic residues.

The protein resides in the cytoplasm. The protein localises to the cytoskeleton. Its subcellular location is the cilium basal body. Binds to disheveled (dsh) and Rho, and mediates Wnt-induced dsh-Rho complex formation during gastrulation. May play a role as a scaffolding protein to recruit Rho-GDP and Rho-GEF, thereby enhancing Rho-GTP formation. Can direct nucleation and elongation of new actin filaments. Involved in building functional cilia. Involved in building functional cilia. Involved in the organization of the subapical actin network in multiciliated epithelial cells. The sequence is that of Disheveled-associated activator of morphogenesis 1-A (daam1-a) from Xenopus laevis (African clawed frog).